The primary structure comprises 449 residues: MGKLFGTDGVRGVANKELTCELAFDLGRAGAYVLTEMHKKPKILIGKDTRISCDMLEAALCAGLTSVGADVYLAGVVTTPAIAYLVKSHGFDAGIMISASHNPYEFNGIKFFNSQGFKLSDQIEEKIEDIILNKKWDEVPHAQFDAIGRVNRVDLKKDYQEYLKSTLNGASFKGLKIVIDCANGAAYKIAPEVFEELGAEVVVINNQPDGTNINKECGSTHLKMLQQEVVKNRADFGIAYDGDADRTLFVDEEGNIVDGDKIMLLLAQNLKQQGRLSRNTLIVTVMSNMGLFVAAKELGIELEVTKVGDRYVLEKMLEGGYSIGGEQSGHIILLDFATTGDGILTSLQLTKLIRESGKKLSDLAKIMKVYPQVLVNAKVENGKKDLYSKDPVILEAIKKVEEKLNGKGRVLIRPSGTEPLIRVMIEGEDYEEIKKDAEALASLIESRLS.

Serine 100 acts as the Phosphoserine intermediate in catalysis. Mg(2+)-binding residues include serine 100, aspartate 241, aspartate 243, and aspartate 245. Serine 100 is subject to Phosphoserine.

It belongs to the phosphohexose mutase family. Requires Mg(2+) as cofactor. Activated by phosphorylation.

It catalyses the reaction alpha-D-glucosamine 1-phosphate = D-glucosamine 6-phosphate. Catalyzes the conversion of glucosamine-6-phosphate to glucosamine-1-phosphate. This Caldicellulosiruptor bescii (strain ATCC BAA-1888 / DSM 6725 / KCTC 15123 / Z-1320) (Anaerocellum thermophilum) protein is Phosphoglucosamine mutase.